The chain runs to 199 residues: FMN-dependent NADH:quinone oxidoreductase (199 aa).

Residues Ser-9, 15 to 17 (SNS), and 95 to 98 (MYNF) each bind FMN.

The protein belongs to the azoreductase type 1 family. In terms of assembly, homodimer. FMN serves as cofactor.

It carries out the reaction 2 a quinone + NADH + H(+) = 2 a 1,4-benzosemiquinone + NAD(+). The catalysed reaction is N,N-dimethyl-1,4-phenylenediamine + anthranilate + 2 NAD(+) = 2-(4-dimethylaminophenyl)diazenylbenzoate + 2 NADH + 2 H(+). Its function is as follows. Quinone reductase that provides resistance to thiol-specific stress caused by electrophilic quinones. Also exhibits azoreductase activity. Catalyzes the reductive cleavage of the azo bond in aromatic azo compounds to the corresponding amines. In Aromatoleum aromaticum (strain DSM 19018 / LMG 30748 / EbN1) (Azoarcus sp. (strain EbN1)), this protein is FMN-dependent NADH:quinone oxidoreductase.